The sequence spans 322 residues: tRNA U34 carboxymethyltransferase (322 aa).

Carboxy-S-adenosyl-L-methionine-binding positions include K92, W106, K111, G131, 153 to 155, 181 to 182, M196, Y200, and R315; these read DPS and VE.

The protein belongs to the class I-like SAM-binding methyltransferase superfamily. CmoB family. As to quaternary structure, homotetramer.

The catalysed reaction is carboxy-S-adenosyl-L-methionine + 5-hydroxyuridine(34) in tRNA = 5-carboxymethoxyuridine(34) in tRNA + S-adenosyl-L-homocysteine + H(+). In terms of biological role, catalyzes carboxymethyl transfer from carboxy-S-adenosyl-L-methionine (Cx-SAM) to 5-hydroxyuridine (ho5U) to form 5-carboxymethoxyuridine (cmo5U) at position 34 in tRNAs. The chain is tRNA U34 carboxymethyltransferase from Pseudoalteromonas translucida (strain TAC 125).